A 471-amino-acid polypeptide reads, in one-letter code: Serine hydroxymethyltransferase, cytosolic (471 aa).

N6-(pyridoxal phosphate)lysine is present on Lys-249.

Belongs to the SHMT family. It depends on pyridoxal 5'-phosphate as a cofactor.

The protein localises to the cytoplasm. It localises to the cytosol. The enzyme catalyses (6R)-5,10-methylene-5,6,7,8-tetrahydrofolate + glycine + H2O = (6S)-5,6,7,8-tetrahydrofolate + L-serine. It functions in the pathway one-carbon metabolism; tetrahydrofolate interconversion. Catalyzes the interconversion of serine and glycine. Essential for viability and required for virulence in a murine model of established pulmonary infection. The chain is Serine hydroxymethyltransferase, cytosolic from Aspergillus fumigatus (strain ATCC MYA-4609 / CBS 101355 / FGSC A1100 / Af293) (Neosartorya fumigata).